The sequence spans 121 residues: Protein yippee (121 aa).

Residues 13-110 enclose the Yippee domain; the sequence is KLFNCAQCHT…LEYALITEAE (98 aa). Zn(2+)-binding residues include C17, C20, C73, and C76.

Belongs to the yippee family. As to quaternary structure, interacts with hemolin.

The sequence is that of Protein yippee from Drosophila melanogaster (Fruit fly).